The chain runs to 360 residues: Photosystem II protein D1 (360 aa).

The next 3 helical transmembrane spans lie at 29–46 (YIGW…TAAS), 118–133 (HFLI…EWEL), and 142–156 (WIFV…AASA). Position 118 (histidine 118) interacts with chlorophyll a. Pheophytin a is bound at residue tryptophan 126. 2 residues coordinate [CaMn4O5] cluster: aspartate 170 and glutamate 189. The helical transmembrane segment at 197–218 (FHMAGVAGVFGGSLFSAMHGSL) threads the bilayer. A chlorophyll a-binding site is contributed by histidine 198. A quinone-binding positions include histidine 215 and 264–265 (SF). Histidine 215 contacts Fe cation. Fe cation is bound at residue histidine 272. The helical transmembrane segment at 274–288 (FLAAWPVVGIWLTAL) threads the bilayer. Histidine 332, glutamate 333, aspartate 342, and alanine 344 together coordinate [CaMn4O5] cluster. Positions 345-360 (SNEILPVAISAPSVVG) are excised as a propeptide.

It belongs to the reaction center PufL/M/PsbA/D family. As to quaternary structure, PSII is composed of 1 copy each of membrane proteins PsbA, PsbB, PsbC, PsbD, PsbE, PsbF, PsbH, PsbI, PsbJ, PsbK, PsbL, PsbM, PsbT, PsbX, PsbY, PsbZ, Psb30/Ycf12, at least 3 peripheral proteins of the oxygen-evolving complex and a large number of cofactors. It forms dimeric complexes. The cofactor is The D1/D2 heterodimer binds P680, chlorophylls that are the primary electron donor of PSII, and subsequent electron acceptors. It shares a non-heme iron and each subunit binds pheophytin, quinone, additional chlorophylls, carotenoids and lipids. D1 provides most of the ligands for the Mn4-Ca-O5 cluster of the oxygen-evolving complex (OEC). There is also a Cl(-1) ion associated with D1 and D2, which is required for oxygen evolution. The PSII complex binds additional chlorophylls, carotenoids and specific lipids.. In terms of processing, tyr-161 forms a radical intermediate that is referred to as redox-active TyrZ, YZ or Y-Z. C-terminally processed by CTPA; processing is essential to allow assembly of the oxygen-evolving complex and thus photosynthetic growth.

It localises to the plastid. Its subcellular location is the chloroplast thylakoid membrane. It carries out the reaction 2 a plastoquinone + 4 hnu + 2 H2O = 2 a plastoquinol + O2. Photosystem II (PSII) is a light-driven water:plastoquinone oxidoreductase that uses light energy to abstract electrons from H(2)O, generating O(2) and a proton gradient subsequently used for ATP formation. It consists of a core antenna complex that captures photons, and an electron transfer chain that converts photonic excitation into a charge separation. The D1/D2 (PsbA/PsbD) reaction center heterodimer binds P680, the primary electron donor of PSII as well as several subsequent electron acceptors. This chain is Photosystem II protein D1, found in Ectocarpus siliculosus (Brown alga).